The sequence spans 502 residues: MEEIQGYLQPERSQQHNFLYPLLFQESIYALAHDRGLNRSISFKNTGYEKKLSFQIVKRLITRIYQRIYFTTYSSNKSQIFGPNKSLYSKLLSEGFAFIVEIPFSLRFILERKKILKSQNLRSIHSIFPFLEDNFSHLNYVLDILIPYPPHLEILVQTLHYWVKDASSLHLLRFFLHEYCNFNIFITPKRSRSPFSKINQRFFFFLYNSYVCEYESIFLFLRNQSLHLRSTSFGALFERNIFYGKIECFVKVFAKDFKANLCLLKDADLSMHYFRYRGKSILASKGTLLLMSKWNYYFVNFWQCSFCLWFHTERIYISQLSSHSLDFMGYLSSIPLTPSTVRSQMLENSFLINNAIKKFDTIVPIIPIIGSLAKAKFCNVLGNPISKPVWADLSDSDIIERFGHIYRNFFHYYSGSSKKRSLYRIKYILRLSCARTLARKHKSTVRAFLQSLGSEFLEEFFTSEEQILSFTFPNASSTLRGVYKRRIWYFDIVCINELANYQ.

Belongs to the intron maturase 2 family. MatK subfamily.

It localises to the plastid. It is found in the chloroplast. Functionally, usually encoded in the trnK tRNA gene intron. Probably assists in splicing its own and other chloroplast group II introns. This is Maturase K from Ipomoea purpurea (Common morning glory).